Reading from the N-terminus, the 223-residue chain is Ribosomal RNA small subunit methyltransferase G (223 aa).

Residues Gly-82, Leu-87, 133–134 (AE), and Arg-151 each bind S-adenosyl-L-methionine.

It belongs to the methyltransferase superfamily. RNA methyltransferase RsmG family.

It localises to the cytoplasm. Functionally, specifically methylates the N7 position of guanine in position 518 of 16S rRNA. This Corynebacterium glutamicum (strain R) protein is Ribosomal RNA small subunit methyltransferase G.